A 79-amino-acid chain; its full sequence is uncharacterized protein (79 aa).

A helical membrane pass occupies residues 15 to 37 (KSIVSVLALTSLGCGVFVISATA).

It is found in the membrane. This is an uncharacterized protein from Dictyostelium discoideum (Social amoeba).